A 558-amino-acid polypeptide reads, in one-letter code: DALR anticodon-binding domain-containing protein 3 (558 aa).

Residues 213-240 (KALENSAYRDRETEKGKRRSRGEEIEGE) are disordered.

In Danio rerio (Zebrafish), this protein is DALR anticodon-binding domain-containing protein 3 (dalrd3).